The primary structure comprises 72 residues: UPF0270 protein KPN78578_37030 (72 aa).

This sequence belongs to the UPF0270 family.

This is UPF0270 protein KPN78578_37030 from Klebsiella pneumoniae subsp. pneumoniae (strain ATCC 700721 / MGH 78578).